The chain runs to 152 residues: Antiholin-like protein LrgA (152 aa).

Transmembrane regions (helical) follow at residues 23–43 (YSIFQQALTIAVILLISKIIE), 45–65 (FMPIPMPASVIGLVLLFIALC), 77–97 (VGTALTNNIGFLFVPAGISVI), and 108–128 (ILIILLIIISTLLLLICTGFA).

Belongs to the CidA/LrgA family. LrgA subfamily.

It localises to the cell membrane. Its function is as follows. Inhibits the expression or activity of extracellular murein hydrolases by interacting, possibly with LrgB, with the holin-like proteins CidA and/or CidB. The LrgAB and CidAB proteins may affect the proton motive force of the membrane. May be involved in programmed cell death (PCD), possibly triggering PCD in response to antibiotics and environmental stresses. This chain is Antiholin-like protein LrgA, found in Staphylococcus epidermidis (strain ATCC 35984 / DSM 28319 / BCRC 17069 / CCUG 31568 / BM 3577 / RP62A).